Reading from the N-terminus, the 214-residue chain is uncharacterized protein (214 aa).

A helical membrane pass occupies residues 9–31 (FLYFAISVLVNLLFLKILYIYLF). The disordered stretch occupies residues 53 to 74 (APPKKPGKPQKKVVKKKPEAVS). Positions 54 to 67 (PPKKPGKPQKKVVK) are enriched in basic residues.

Its subcellular location is the membrane. This is an uncharacterized protein from Aquifex aeolicus (strain VF5).